Here is a 315-residue protein sequence, read N- to C-terminus: MLKVNADFLTKDQVIYDLVIVGAGPAGIASAIYGKRANLNLAIIEGNTPGGKIVKTNIVENYPGFKTITGPELGLEMYNHLLAFEPVVFYNNLIKIDHLNDTFILYLDNKTTVFSKTVIYATGMEERKLGIEKEDYFYGKGISYCAICDAALYKGKTVGVVGGGNSAIQEAIYLSSIAKTVHLIHRREVFRSDALLVEKLKKISNVVFHLNATVKQLIGQEKLQTVKLASTVDKSESEIAIDCLFPYIGFESNNKPVLDLKLNLDQNGFILGDENMQTNIKGFYVAGDCRSKSFRQIATAISDGVTAVLKVRDDI.

45 to 52 (EGNTPGGK) contributes to the FAD binding site. A disulfide bridge connects residues Cys145 and Cys148. Position 288-297 (288-297 (DCRSKSFRQI)) interacts with FAD.

Belongs to the class-II pyridine nucleotide-disulfide oxidoreductase family. Homodimer. FAD serves as cofactor.

It is found in the cytoplasm. It carries out the reaction [thioredoxin]-dithiol + NADP(+) = [thioredoxin]-disulfide + NADPH + H(+). The protein is Thioredoxin reductase (trxB) of Mycoplasma genitalium (strain ATCC 33530 / DSM 19775 / NCTC 10195 / G37) (Mycoplasmoides genitalium).